The primary structure comprises 763 residues: MSELLSFALFLASVLIYAWKAGRNTWWFAATLTVLGLFVVLNITLFASDYFTGDGINDAVLYTLTNSLTGAGVSKYILPGIGIVLGLTAVFGALGWILRRRRHHPHHFGYSLLALLLALGSVDASPAFRQITELVKSQSRDGDPDFAAYYKEPSKTIPDPKLNLVYIYGESLERTYFDNEAFPDLTPELGALKNEGLDFSHTQQLPGTDYTIAGMVASQCGIPLFAPFEGNASASVSSFFPQNICLGDILKNSGYQNYFVQGANLRFAGKDVFLKSHGFDHLYGSEELKSVVADPHYRNDWGFYDDTVLDEAWKKFEELSRSGQRFSLFTLTVDTHHPDGFISRTCNRKKYDFDGKPNQSFSAVSCSQENIATFINKIKASPWFKDTVIVVSSDHLAMNNTAWKYLNKQDRNNLFFVIRGDKPQQETLAVKRNTMDNGATVLDILGGDNYLGLGRSSLSGQSMSEIFLNIKEKTLAWKPDIIRLWKFPKEMKEFTIDQQKNMIAFSGSHFRLPLLLRVSDKRVEPLPESEYSAPLRFQLADFAPRDNFVWVDRCYKMAQLWAPELALSTDWCVSQGQLGGQQIVQHVDKTTWKSKTAFKDTVIDMARYKGNVDTLKIVDNDIRYKADSFIFNVAGAPEEVKQFSGISRPESWGRWSNAQLGDEVKIEYKHPLPKKFDLVITAKAYGNNASRPIPVRVGNEEQTLVLGNEVTTTTLHFDNPTDADTLVIVPPEPVSTNEGNILGHSPRKLGIGMVEIKVVEREG.

Helical transmembrane passes span 4-19, 26-48, 76-98, and 105-127; these read LLSFALFLASVLIYAW, WWFAATLTVLGLFVVLNITLFAS, YILPGIGIVLGLTAVFGALGWIL, and PHHFGYSLLALLLALGSVDASPA.

This sequence belongs to the OpgB family.

Its subcellular location is the cell inner membrane. The enzyme catalyses a phosphatidylglycerol + a membrane-derived-oligosaccharide D-glucose = a 1,2-diacyl-sn-glycerol + a membrane-derived-oligosaccharide 6-(glycerophospho)-D-glucose.. The protein operates within glycan metabolism; osmoregulated periplasmic glucan (OPG) biosynthesis. Functionally, transfers a phosphoglycerol residue from phosphatidylglycerol to the membrane-bound nascent glucan backbones. This Escherichia coli O157:H7 protein is Phosphoglycerol transferase I.